Here is a 197-residue protein sequence, read N- to C-terminus: Female-specific protein transformer (197 aa).

Basic and acidic residues-rich tracts occupy residues 1–17 and 24–39; these read MKMD…DSRG and RERE…DSRK. 2 disordered regions span residues 1–136 and 158–197; these read MKMD…PKII and GYQR…RPPY. Basic residues-rich tracts occupy residues 58–75 and 84–127; these read RRLR…RSRS and SRHR…RSPH. Positions 163 to 172 are enriched in pro residues; sequence PRPPPFPPAP.

The protein localises to the nucleus speckle. Functionally, member of the regulatory pathway controlling female somatic sexual differentiation, regulated by Sxl. Activates dsx female-specific splicing by promoting the formation of a splicing enhancer complex which consists of tra, tra2 and sr proteins. Together with tra-2, plays a role in switching fru splicing from the male-specific pattern to the female-specific pattern through activation of the female-specific fru 5'-splice site. No known function in males. The protein is Female-specific protein transformer (tra) of Drosophila melanogaster (Fruit fly).